Reading from the N-terminus, the 66-residue chain is Large ribosomal subunit protein bL35 (66 aa).

Over residues 1–16 (MPKMKTHRGAAKRVKR) the composition is skewed to basic residues. Positions 1-28 (MPKMKTHRGAAKRVKRTGSGQLKRSRAF) are disordered.

It belongs to the bacterial ribosomal protein bL35 family.

This is Large ribosomal subunit protein bL35 from Staphylococcus epidermidis (strain ATCC 35984 / DSM 28319 / BCRC 17069 / CCUG 31568 / BM 3577 / RP62A).